The chain runs to 155 residues: Arginine repressor (155 aa).

This sequence belongs to the ArgR family.

The protein resides in the cytoplasm. Its pathway is amino-acid biosynthesis; L-arginine biosynthesis [regulation]. Functionally, regulates arginine biosynthesis genes. This is Arginine repressor from Histophilus somni (strain 129Pt) (Haemophilus somnus).